The chain runs to 161 residues: uncharacterized protein (161 aa).

This is an uncharacterized protein from Acidianus convivator (ATV).